A 205-amino-acid chain; its full sequence is MKLDVIKLDGGKAGDIELSEDLFGLEPRADILHRVVRWQRNNAQAGTHKVKTRSETSYSTKKIYRQKGTGGARHGDRNAPIFRKGGIYKGPTPRSHGHDLTKKFRKLGLRHALSAKAKAGELVVIENAEAEGKTAALAKQVANLGWKRALVIDGAAVNEGFARAAKNIEGLDILPSMGANVYDILKRDTLVLTKSAVEALEARLK.

It belongs to the universal ribosomal protein uL4 family. In terms of assembly, part of the 50S ribosomal subunit.

Its function is as follows. One of the primary rRNA binding proteins, this protein initially binds near the 5'-end of the 23S rRNA. It is important during the early stages of 50S assembly. It makes multiple contacts with different domains of the 23S rRNA in the assembled 50S subunit and ribosome. Forms part of the polypeptide exit tunnel. This is Large ribosomal subunit protein uL4 from Ruegeria sp. (strain TM1040) (Silicibacter sp.).